The following is a 298-amino-acid chain: Tyrosine recombinase XerD (298 aa).

Positions 2–87 constitute a Core-binding (CB) domain; it reads KQDLARIEQF…AVRRLFQYLY (86 aa). The region spanning 108–292 is the Tyr recombinase domain; that stretch reads RLPKDLSEAQ…ATERLRQLHQ (185 aa). Catalysis depends on residues R148, K172, H244, R247, and H270. Catalysis depends on Y279, which acts as the O-(3'-phospho-DNA)-tyrosine intermediate.

It belongs to the 'phage' integrase family. XerD subfamily. As to quaternary structure, forms a cyclic heterotetrameric complex composed of two molecules of XerC and two molecules of XerD, in which XerC interacts with XerD via its C-terminal region, XerD interacts with XerC via its C-terminal region and so on.

Its subcellular location is the cytoplasm. Its activity is regulated as follows. FtsK may regulate the catalytic switch between XerC and XerD in the heterotetrameric complex during the two steps of the recombination process. Its function is as follows. Site-specific tyrosine recombinase, which acts by catalyzing the cutting and rejoining of the recombining DNA molecules. Binds cooperatively to specific DNA consensus sequences that are separated from XerC binding sites by a short central region, forming the heterotetrameric XerC-XerD complex that recombines DNA substrates. The complex is essential to convert dimers of the bacterial chromosome into monomers to permit their segregation at cell division. It also contributes to the segregational stability of plasmids. In the complex XerD specifically exchanges the bottom DNA strands. This chain is Tyrosine recombinase XerD, found in Escherichia coli O157:H7.